The primary structure comprises 349 residues: Beta-glucanase (349 aa).

The signal sequence occupies residues 1–27 (MNIKKTAVKSALAVAAAAAALTTNVSA). The region spanning 28 to 197 (KDFSGAELYT…WVKVYKYTPG (170 aa)) is the GH16 domain. Glu-79 (nucleophile) is an active-site residue. The active-site Proton donor is the Glu-83. The disordered stretch occupies residues 258 to 311 (SFNGQVPRDDEPAPQSSSSAPASSSSVPASSSSVPASSSSAFVPPSSSSATNAI). Residues 270 to 307 (APQSSSSAPASSSSVPASSSSVPASSSSAFVPPSSSSA) are compositionally biased toward low complexity. 5 repeat units span residues 271–277 (PQSSSSA), 278–284 (PASSSSV), 285–291 (PASSSSV), 292–298 (PASSSSA), and 301–307 (PPSSSSA). The tract at residues 271–307 (PQSSSSAPASSSSVPASSSSVPASSSSAFVPPSSSSA) is 5 X 7 AA tandem repeats of P-X-S-S-S-S-X.

It belongs to the glycosyl hydrolase 16 family.

It carries out the reaction Hydrolysis of (1-&gt;4)-beta-D-glucosidic linkages in beta-D-glucans containing (1-&gt;3)- and (1-&gt;4)-bonds.. The polypeptide is Beta-glucanase (Fibrobacter succinogenes (strain ATCC 19169 / S85)).